Reading from the N-terminus, the 251-residue chain is Insulin-induced gene 1 protein (251 aa).

At 1–58 (MQTLEEHCWSCSCTRGRDKKGTRLSTWLAQRAAKAMSSLNSLLSLAYHTLASSEGRSL) the chain is on the cytoplasmic side. Residues 59–81 (IRRSLVLFAVGVFLALVLNLLQI) traverse the membrane as a helical segment. At 82–100 (QRNVTLFPEEVIATIFSSA) the chain is on the extracellular side. The chain crosses the membrane as a helical span at residues 101–118 (WWVPPCCGTAAAVVGLLY). Residues 119-133 (PCIDSHLGEPHKFKR) are Cytoplasmic-facing. A helical transmembrane segment spans residues 134–156 (EWASVMRCIAVFVGINHASAKLD). Residues 157–159 (FAN) lie on the Extracellular side of the membrane. The chain crosses the membrane as a helical span at residues 160–178 (NVQLSLTLAALSLGLWWTF). Over 179–183 (DRSRS) the chain is Cytoplasmic. A helical transmembrane segment spans residues 184 to 205 (GLGLGITIAFLATLITQFLVYN). The Extracellular segment spans residues 206 to 219 (GVYQYTSPDFLYIR). The chain crosses the membrane as a helical span at residues 220–237 (SWLPCIFFSGGVTVGNIG). The Cytoplasmic segment spans residues 238–251 (RQLAMGSSEKTHSD). A KxHxx motif is present at residues 245-251 (SEKTHSD).

Belongs to the INSIG family. In terms of assembly, interacts with scap; interaction is direct and only takes place in the presence of sterols; it prevents interaction between scap and the coat protein complex II (COPII). Associates with the SCAP-SREBP complex; association is mediated via its interaction with scap and only takes place in the presence of sterols.

It localises to the endoplasmic reticulum membrane. Functionally, oxysterol-binding protein that mediates feedback control of cholesterol synthesis by controlling both endoplasmic reticulum to Golgi transport of scap and degradation of hmgcr. Acts as a negative regulator of cholesterol biosynthesis by mediating the retention of the SCAP-SREBP complex in the endoplasmic reticulum, thereby blocking the processing of sterol regulatory element-binding proteins (SREBPs). Binds oxysterol, including 25-hydroxycholesterol, regulating interaction with scap and retention of the SCAP-SREBP complex in the endoplasmic reticulum. In presence of oxysterol, interacts with scap, retaining the SCAP-SREBP complex in the endoplasmic reticulum, thereby preventing scap from escorting SREBPs to the Golgi. Sterol deprivation reduces oxysterol-binding, disrupting the interaction between insig1 and scap, thereby promoting Golgi transport of the SCAP-SREBP complex, followed by processing and nuclear translocation of SREBPs. Also regulates cholesterol synthesis by regulating degradation of hmgcr. In Xenopus tropicalis (Western clawed frog), this protein is Insulin-induced gene 1 protein.